We begin with the raw amino-acid sequence, 310 residues long: tRNA dimethylallyltransferase (310 aa).

9-16 (GPTAVGKT) contributes to the ATP binding site. 11–16 (TAVGKT) is a binding site for substrate. The interaction with substrate tRNA stretch occupies residues 34–37 (DSMQ).

It belongs to the IPP transferase family. As to quaternary structure, monomer. Mg(2+) is required as a cofactor.

It carries out the reaction adenosine(37) in tRNA + dimethylallyl diphosphate = N(6)-dimethylallyladenosine(37) in tRNA + diphosphate. Functionally, catalyzes the transfer of a dimethylallyl group onto the adenine at position 37 in tRNAs that read codons beginning with uridine, leading to the formation of N6-(dimethylallyl)adenosine (i(6)A). The polypeptide is tRNA dimethylallyltransferase (Syntrophomonas wolfei subsp. wolfei (strain DSM 2245B / Goettingen)).